The primary structure comprises 1126 residues: MGNNQGKTLKIGSYHLNFVKQIAEGGFSYVFLVKDSNTSKHYALKRILIRDEDELKGVKHEISIMKRLTKHKNIVKILDYHKVSDKNNTEMFILMEYCSGGHLVEIMQKRLSSGSKFTDQEILKIFQDICESVAYMHSQQPLIIHRDLKVENVLLDEESGIYKLCDFGSATEEITRMKNKTEMQNAEDDISRHTTLQYRAPEIVDFYRSPVINEKIDIWALGCLLYKLLFYVTPFEDSGSLGILNSNYTIPPNHTHSNDLISLIKIMLNPDPINRPNIFEITNQLNLLRNQQPLFPSHKSNILLSYNENNNINNNNNNINNNNNNNIVNGKNIPKPLPKVVSQTTPTPTPPPPAPSQSPSPSPSPTVVNNIENNSNGLEHSNSNGNISQPSPTPPKRRATPGTTPSLQPVSFPPNNSNNSFDDPFRDSPRTNLSNNPFNVNSNDNSNSSNNNNNNNNNNNNNNNNNGNNITNEEILNIITQLTNNDQTNTFDSGLLLKLKSMKPGKGTMHIIVKRPLKEPLVCFKSLLLVHALLSEGNNIQFKSDVHDSKDLFNNLYLGWSKQKDRYLQLGELLSHYSLLLYKFILFHQKNYMIDGSFAFEEMKWGIPESLDSNNHPISINTIKALFDIMDHLFLVQNNLSDYCINNICSSNSSGSGNVPISLLQHCVNILNSSSYSIFCFISGSIDVLSKQFSDVDMKLISCVNQFQSMYTRLREQYTKLAQVPCFSDIFFPTLPNTAPTFTIVRSNSFNRLNSSLSDLNLNNNNNNNNNSNNSNNSNNSNSGNLSGNASLNSSFDNINSSNPFSTEPTFNPFSATTTNTSESGFGNFGLSEPTSNPSPRYQQSNNNNNNNNNNNGTPISLTPGSLSPVIGAKKPPLPPNIHHLQQQQHPQQQQQQQQQQQQQQQQQQQQQQQQQQQHPQQQGLRFPHSASLEDARLYTLILTPSSSPPLSPSTGPTTAAQQQQQQQQSQHTFDNFNINGHAPPVPQSTQPSFQPHVSFAPNVNINNNNNSHVSAPHSLNSSSSSISSISNPNLGGIAQKGSGNSLMPPPLYKPAARGHRRSQSSNGDEVRRRNLLQQQLEQNRDFLNHNRLLNKQSRMNNPNNLFDEGDSGFGDGEEEDEGLLN.

Residues 16–295 form the Protein kinase domain; the sequence is LNFVKQIAEG…NLLRNQQPLF (280 aa). ATP-binding positions include 22–30 and K45; that span reads IAEGGFSYV. The active-site Proton acceptor is the D147. A compositionally biased stretch (low complexity) spans 314 to 333; the sequence is NNNNNINNNNNNNIVNGKNI. Disordered regions lie at residues 314 to 469, 760 to 901, 944 to 1072, and 1095 to 1126; these read NNNN…NGNN, LNLN…QQQQ, TPSS…DEVR, and NKQS…GLLN. Residues 347–364 show a composition bias toward pro residues; the sequence is TPTPPPPAPSQSPSPSPS. Over residues 367-390 the composition is skewed to polar residues; that stretch reads VVNNIENNSNGLEHSNSNGNISQP. 3 stretches are compositionally biased toward low complexity: residues 413–422, 432–469, and 760–795; these read PPNNSNNSFD, NLSN…NGNN, and LNLN…LNSS. 2 stretches are compositionally biased toward polar residues: residues 796–825 and 833–845; these read FDNI…SESG and EPTS…YQQS. Over residues 846–856 the composition is skewed to low complexity; the sequence is NNNNNNNNNNN. A compositionally biased stretch (polar residues) spans 857–866; that stretch reads GTPISLTPGS. Composition is skewed to low complexity over residues 886–901, 953–971, and 1003–1035; these read QQQQ…QQQQ, PSTG…QQSQ, and NVNI…NPNL. The segment covering 1095–1105 has biased composition (polar residues); the sequence is NKQSRMNNPNN. Acidic residues predominate over residues 1108–1126; the sequence is DEGDSGFGDGEEEDEGLLN.

The protein belongs to the protein kinase superfamily. Ser/Thr protein kinase family.

It catalyses the reaction L-seryl-[protein] + ATP = O-phospho-L-seryl-[protein] + ADP + H(+). The catalysed reaction is L-threonyl-[protein] + ATP = O-phospho-L-threonyl-[protein] + ADP + H(+). The protein is Probable serine/threonine-protein kinase DDB_G0280111 of Dictyostelium discoideum (Social amoeba).